The chain runs to 199 residues: Fe/S biogenesis protein NfuA (199 aa).

2 residues coordinate [4Fe-4S] cluster: Cys151 and Cys154.

It belongs to the NfuA family. Homodimer. It depends on [4Fe-4S] cluster as a cofactor.

Involved in iron-sulfur cluster biogenesis. Binds a 4Fe-4S cluster, can transfer this cluster to apoproteins, and thereby intervenes in the maturation of Fe/S proteins. Could also act as a scaffold/chaperone for damaged Fe/S proteins. The sequence is that of Fe/S biogenesis protein NfuA from Xylella fastidiosa (strain 9a5c).